Reading from the N-terminus, the 423-residue chain is MNLLDYKSRPILSLTSIFAAWKSFLLAIALGASIGPDYDTSTSLFFAIVHGASSPRSLATRLTRWDALYFMHDAVKGKVYEQEWAFGIGMPAAVRSICGLLNLQRWEALVAIAISHVSHLVAVLALYQLTIVLCNDRKLAYLASVVHVLSPAGLFISAPYAESPFACMSFVGNLLYAISLKSSPDSLKRNLAVVGAGLSYGISCTLRSNGLFGGVLFAVETVKCLLALRNGFSISKILRLVAPLIGGILVAVGFVAPQVLAWMRYCNGNEEQRAWCGHRIPSIYTFVQAEYWDVGFLKYWTPNQIPLFLLAAPMLTILLKSGTETMREPSRGLGAVAMGTNEESRLLVRTLAAIQTLLAVLAITNYHVQIISRLSSGYPVWYWWVASCLMDKQRQSLGYGVIVFITMYAAIQGGLFASFLPPA.

A run of 9 helical transmembrane segments spans residues 11 to 31 (ILSL…IALG), 106 to 126 (WEAL…VLAL), 139 to 159 (LAYL…ISAP), 160 to 180 (YAES…AISL), 197 to 219 (GLSY…LFAV), 240 to 260 (LVAP…PQVL), 299 to 319 (YWTP…TILL), 351 to 371 (LAAI…VQII), and 400 to 420 (GVIV…ASFL).

The protein belongs to the PIGV family.

It localises to the endoplasmic reticulum membrane. It participates in glycolipid biosynthesis; glycosylphosphatidylinositol-anchor biosynthesis. In terms of biological role, mannosyltransferase involved in glycosylphosphatidylinositol-anchor biosynthesis. Transfers the second mannose to the glycosylphosphatidylinositol during GPI precursor assembly. This is GPI mannosyltransferase 2 (GPI18) from Gibberella zeae (strain ATCC MYA-4620 / CBS 123657 / FGSC 9075 / NRRL 31084 / PH-1) (Wheat head blight fungus).